The sequence spans 234 residues: Glucosamine-6-phosphate deaminase (234 aa).

Aspartate 63 (proton acceptor; for enolization step) is an active-site residue. Asparagine 129 serves as the catalytic For ring-opening step. Residue histidine 131 is the Proton acceptor; for ring-opening step of the active site. The For ring-opening step role is filled by glutamate 136.

Belongs to the glucosamine/galactosamine-6-phosphate isomerase family. NagB subfamily.

The catalysed reaction is alpha-D-glucosamine 6-phosphate + H2O = beta-D-fructose 6-phosphate + NH4(+). It participates in amino-sugar metabolism; N-acetylneuraminate degradation; D-fructose 6-phosphate from N-acetylneuraminate: step 5/5. In terms of biological role, catalyzes the reversible isomerization-deamination of glucosamine 6-phosphate (GlcN6P) to form fructose 6-phosphate (Fru6P) and ammonium ion. The sequence is that of Glucosamine-6-phosphate deaminase from Listeria monocytogenes serotype 4b (strain CLIP80459).